Consider the following 1033-residue polypeptide: E3 ubiquitin-protein ligase Topors (1033 aa).

The span at 1-10 (MGSQPPPPGS) shows a compositional bias: pro residues. The segment at 1 to 36 (MGSQPPPPGSPLSREEGEAPPLVPAEEGRRRSRRVR) is disordered. The tract at residues 52–376 (ELASNGPAVP…MAAFDQHANY (325 aa)) is required for DNA-binding. Residues K74, K77, K84, and K89 each participate in a glycyl lysine isopeptide (Lys-Gly) (interchain with G-Cter in SUMO2) cross-link. S99 carries the phosphoserine modification. The RING-type zinc-finger motif lies at 104–143 (CPICLDRFDNVSYLDRCLHKFCFRCVQEWSKNKAECPLCK). Residue K160 forms a Glycyl lysine isopeptide (Lys-Gly) (interchain with G-Cter in SUMO2) linkage. S196 is subject to Phosphoserine. K251 is covalently cross-linked (Glycyl lysine isopeptide (Lys-Gly) (interchain with G-Cter in SUMO2)). Disordered regions lie at residues 414–477 (QAPW…SSSD) and 496–692 (VELS…RYYL). A compositionally biased stretch (low complexity) spans 434-444 (VGVSSLLNSSD). Positions 438–574 (SLLNSSDSSD…RSTSLPAPRD (137 aa)) are sumoylation and localization to discrete nuclear foci. An interaction with SUMO1 region spans residues 438–654 (SLLNSSDSSD…RSRTRDSSWS (217 aa)). Over residues 455–464 (TTSQIQGVQT) the composition is skewed to polar residues. The interaction with p53/TP53 stretch occupies residues 457-731 (SQIQGVQTND…RRTLSRAHYS (275 aa)). The interval 457–879 (SQIQGVQTND…GKATDTSKHH (423 aa)) is interaction with TOP1. Low complexity predominate over residues 465-477 (NDDVNNDSDSSSD). Residue S500 is modified to Phosphoserine. A compositionally biased stretch (basic and acidic residues) spans 507-518 (PYEKVETVKTQE). Low complexity predominate over residues 522–535 (SYSSGDSDVSRASS). Residues 540–566 (LGKDEQMSKSHCDSDTRISSKKEEKRS) show a composition bias toward basic and acidic residues. A Glycyl lysine isopeptide (Lys-Gly) (interchain with G-Cter in SUMO) cross-link involves residue K561. A Phosphoserine modification is found at S585. Basic residues-rich tracts occupy residues 613-629 (RNHRKHGKKRLRNKRSR) and 637-647 (PRARKDKKRSR). A compositionally biased stretch (low complexity) spans 654 to 669 (SRRSQTLSLSSGSTSR). K701 participates in a covalent cross-link: Glycyl lysine isopeptide (Lys-Gly) (interchain with G-Cter in SUMO2). Disordered regions lie at residues 713–934 (RDGY…PIQD) and 970–1033 (TVEN…CDVS). Residue S718 is modified to Phosphoserine; by PLK1. A compositionally biased stretch (basic residues) spans 721-730 (RRRTLSRAHY). Over residues 731-747 (SRQSSSPEFRIQSFSER) the composition is skewed to polar residues. A Phosphoserine modification is found at S734. Low complexity predominate over residues 770–780 (SVSSNRSRTTS). The span at 815-837 (FTSKGKDSHYQKSKLDGSYKNES) shows a compositional bias: basic and acidic residues. Residues K818 and K834 each participate in a glycyl lysine isopeptide (Lys-Gly) (interchain with G-Cter in SUMO2) cross-link. A compositionally biased stretch (basic residues) spans 851–860 (KHKRRRRRTR). An interaction with UBE2I region spans residues 851–914 (KHKRRRRRTR…ITIDSDSDGE (64 aa)). A phosphoserine mark is found at S861 and S863. Residues 877-894 (KHHKKKKKKHKKKHKKHH) are compositionally biased toward basic residues. Residues S909, S911, S999, S1016, and S1025 each carry the phosphoserine modification. Polar residues predominate over residues 992–1008 (TFASDLESQSSNVSIQA).

As to quaternary structure, interacts with TOP1. Interacts with the SUMO1 conjugating enzyme UBE2I. Interacts with SUMO1. Interacts with NKX3-1; polyubiquitinates NKX3-1 and induces its proteasomal degradation. Interacts with SIN3A; sumoylates SIN3A. Interacts with IKBKE; induced by DNA damage. Interacts with p53/TP53. Interacts with PARK7/DJ-1. Post-translationally, phosphorylation at Ser-99 regulates the E3 ubiquitin-protein ligase activity but not the SUMO1-protein ligase activity. Phosphorylation at Ser-718 increases the E3 ubiquitin-protein ligase activity versus the E3 SUMO1-protein ligase activity resulting in increased p53/TP53 ubiquitination and degradation. Sumoylated.

It localises to the nucleus. It is found in the PML body. The catalysed reaction is S-ubiquitinyl-[E2 ubiquitin-conjugating enzyme]-L-cysteine + [acceptor protein]-L-lysine = [E2 ubiquitin-conjugating enzyme]-L-cysteine + N(6)-ubiquitinyl-[acceptor protein]-L-lysine.. Its function is as follows. Functions as an E3 ubiquitin-protein ligase and as a E3 SUMO1-protein ligase. Probable tumor suppressor involved in cell growth, cell proliferation and apoptosis that regulates p53/TP53 stability through ubiquitin-dependent degradation. May regulate chromatin modification through sumoylation of several chromatin modification-associated proteins. May be involved in DNA-damage-induced cell death through IKBKE sumoylation. The polypeptide is E3 ubiquitin-protein ligase Topors (Topors) (Mus musculus (Mouse)).